Consider the following 438-residue polypeptide: Xylose isomerase (438 aa).

Catalysis depends on residues His-100 and Asp-103. Glu-231, Glu-267, His-270, Asp-295, Asp-306, Asp-308, and Asp-338 together coordinate Mg(2+).

It belongs to the xylose isomerase family. As to quaternary structure, homotetramer. Requires Mg(2+) as cofactor.

It localises to the cytoplasm. It carries out the reaction alpha-D-xylose = alpha-D-xylulofuranose. The polypeptide is Xylose isomerase (Pseudomonas fluorescens (strain Pf0-1)).